Reading from the N-terminus, the 660-residue chain is Glycogen debranching enzyme (660 aa).

Residue aspartate 338 is the Nucleophile of the active site. The active-site Proton donor is glutamate 373. Residues 460 to 472 (NEANGEDNRDGAW) show a composition bias toward basic and acidic residues. Positions 460–482 (NEANGEDNRDGAWENHSNNHGYE) are disordered.

Belongs to the glycosyl hydrolase 13 family.

The catalysed reaction is Hydrolysis of (1-&gt;6)-alpha-D-glucosidic linkages to branches with degrees of polymerization of three or four glucose residues in limit dextrin.. It functions in the pathway glycan degradation; glycogen degradation. Removes maltotriose and maltotetraose chains that are attached by 1,6-alpha-linkage to the limit dextrin main chain, generating a debranched limit dextrin. The chain is Glycogen debranching enzyme from Cronobacter sakazakii (strain ATCC BAA-894) (Enterobacter sakazakii).